The primary structure comprises 196 residues: MTDTWLIVGLGNPGAQYQGNRHNVGQMVLDELAGRVGAGFKSHKARAQVVEGRLGIGGPRVVLAKPMTYMNVSGGPVSALANFYGISPDHVVAVHDEIDIPFNTVKLKIGGGEGGHNGLRDISKALATKDYLRVRVGVGRPPGRMDTADYVLRDFGTAELKELPFLLDEAADAVELLLQEGLTAAQQKFHPAKTAG.

Tyr17 serves as a coordination point for tRNA. His22 functions as the Proton acceptor in the catalytic mechanism. Residues Tyr69, Asn71, and Asn117 each coordinate tRNA.

Belongs to the PTH family. Monomer.

It is found in the cytoplasm. The catalysed reaction is an N-acyl-L-alpha-aminoacyl-tRNA + H2O = an N-acyl-L-amino acid + a tRNA + H(+). In terms of biological role, hydrolyzes ribosome-free peptidyl-tRNAs (with 1 or more amino acids incorporated), which drop off the ribosome during protein synthesis, or as a result of ribosome stalling. Functionally, catalyzes the release of premature peptidyl moieties from peptidyl-tRNA molecules trapped in stalled 50S ribosomal subunits, and thus maintains levels of free tRNAs and 50S ribosomes. The chain is Peptidyl-tRNA hydrolase from Pseudarthrobacter chlorophenolicus (strain ATCC 700700 / DSM 12829 / CIP 107037 / JCM 12360 / KCTC 9906 / NCIMB 13794 / A6) (Arthrobacter chlorophenolicus).